A 148-amino-acid chain; its full sequence is [Ribosomal protein bS18]-alanine N-acetyltransferase (148 aa).

Positions 2–147 (NTISILSTTD…DAIIMALPIS (146 aa)) constitute an N-acetyltransferase domain. Residues 69–71 (IAV) and 77–82 (RRGLGR) contribute to the acetyl-CoA site. Glu103 (proton acceptor) is an active-site residue. Asn108 contacts acetyl-CoA. The Proton donor role is filled by Tyr115.

The protein belongs to the acetyltransferase family. RimI subfamily.

It is found in the cytoplasm. It carries out the reaction N-terminal L-alanyl-[ribosomal protein bS18] + acetyl-CoA = N-terminal N(alpha)-acetyl-L-alanyl-[ribosomal protein bS18] + CoA + H(+). Its function is as follows. Acetylates the N-terminal alanine of ribosomal protein bS18. The polypeptide is [Ribosomal protein bS18]-alanine N-acetyltransferase (Salmonella typhimurium (strain LT2 / SGSC1412 / ATCC 700720)).